The primary structure comprises 173 residues: MAIRRILTVDNAADLATLKKISTPVEAVTDELRALMDDMLETMYDAPGIGLAAVQVGEPVRVIVMDLAREGEDKAPRYFVNPEILASSEDLQGYEEGCLSVPEYYDEVERPSKVTLRYMNYQGETVVEEAEGLFAVCIQHEMDHLEGVLFIDHLSRLRRDRAMAKVKKARRAA.

The Fe cation site is built by C98 and H140. Residue E141 is part of the active site. H144 provides a ligand contact to Fe cation.

It belongs to the polypeptide deformylase family. Fe(2+) is required as a cofactor.

It catalyses the reaction N-terminal N-formyl-L-methionyl-[peptide] + H2O = N-terminal L-methionyl-[peptide] + formate. Its function is as follows. Removes the formyl group from the N-terminal Met of newly synthesized proteins. Requires at least a dipeptide for an efficient rate of reaction. N-terminal L-methionine is a prerequisite for activity but the enzyme has broad specificity at other positions. This is Peptide deformylase from Caulobacter vibrioides (strain ATCC 19089 / CIP 103742 / CB 15) (Caulobacter crescentus).